The chain runs to 488 residues: Glutamyl-tRNA(Gln) amidotransferase subunit A (488 aa).

Catalysis depends on charge relay system residues lysine 77 and serine 152. Serine 176 functions as the Acyl-ester intermediate in the catalytic mechanism.

The protein belongs to the amidase family. GatA subfamily. In terms of assembly, heterotrimer of A, B and C subunits.

It catalyses the reaction L-glutamyl-tRNA(Gln) + L-glutamine + ATP + H2O = L-glutaminyl-tRNA(Gln) + L-glutamate + ADP + phosphate + H(+). In terms of biological role, allows the formation of correctly charged Gln-tRNA(Gln) through the transamidation of misacylated Glu-tRNA(Gln) in organisms which lack glutaminyl-tRNA synthetase. The reaction takes place in the presence of glutamine and ATP through an activated gamma-phospho-Glu-tRNA(Gln). This chain is Glutamyl-tRNA(Gln) amidotransferase subunit A, found in Streptococcus pyogenes serotype M2 (strain MGAS10270).